The following is a 97-amino-acid chain: Large ribosomal subunit protein bL27 (97 aa).

The propeptide occupies M1–F12. A disordered region spans residues A13–D38.

Belongs to the bacterial ribosomal protein bL27 family. In terms of processing, the N-terminus is cleaved by ribosomal processing cysteine protease Prp.

This Streptococcus equi subsp. equi (strain 4047) protein is Large ribosomal subunit protein bL27.